The chain runs to 451 residues: Phosphoglucosamine mutase (451 aa).

The active-site Phosphoserine intermediate is the S102. S102, D243, D245, and D247 together coordinate Mg(2+). S102 carries the post-translational modification Phosphoserine.

Belongs to the phosphohexose mutase family. Mg(2+) serves as cofactor. Post-translationally, activated by phosphorylation.

The catalysed reaction is alpha-D-glucosamine 1-phosphate = D-glucosamine 6-phosphate. Functionally, catalyzes the conversion of glucosamine-6-phosphate to glucosamine-1-phosphate. This chain is Phosphoglucosamine mutase, found in Brucella canis (strain ATCC 23365 / NCTC 10854 / RM-666).